The chain runs to 522 residues: Peptide methionine sulfoxide reductase MsrA/MsrB (522 aa).

Positions 17 to 174 constitute a Thioredoxin domain; the sequence is LALGACSPKI…ALALIRDPNA (158 aa). The cysteines at positions 68 and 71 are disulfide-linked. Positions 199-354 are peptide methionine sulfoxide reductase A; it reads RTIYLAGGCF…PNGYCHIDIR (156 aa). The active site involves Cys207. A MsrB domain is found at 383–506; it reads DAELKRTLTE…NGASLKFIPL (124 aa). Residues Cys440 and Cys495 are joined by a disulfide bond. The active-site Nucleophile is Cys495.

In the N-terminal section; belongs to the thioredoxin family. The protein in the central section; belongs to the MsrA Met sulfoxide reductase family. It in the C-terminal section; belongs to the MsrB Met sulfoxide reductase family.

The enzyme catalyses L-methionyl-[protein] + [thioredoxin]-disulfide + H2O = L-methionyl-(S)-S-oxide-[protein] + [thioredoxin]-dithiol. The catalysed reaction is [thioredoxin]-disulfide + L-methionine + H2O = L-methionine (S)-S-oxide + [thioredoxin]-dithiol. It carries out the reaction L-methionyl-[protein] + [thioredoxin]-disulfide + H2O = L-methionyl-(R)-S-oxide-[protein] + [thioredoxin]-dithiol. In terms of biological role, has an important function as a repair enzyme for proteins that have been inactivated by oxidation. Catalyzes the reversible oxidation-reduction of methionine sulfoxide in proteins to methionine. The polypeptide is Peptide methionine sulfoxide reductase MsrA/MsrB (msrAB) (Neisseria meningitidis serogroup B (strain ATCC BAA-335 / MC58)).